The primary structure comprises 682 residues: 1,4-alpha-glucan-branching enzyme (682 aa).

(1,4-alpha-D-glucosyl)n-binding residues include tryptophan 88 and lysine 124. The active-site Nucleophile is the aspartate 342. Catalysis depends on glutamate 397, which acts as the Proton donor.

The protein belongs to the glycosyl hydrolase 13 family. GlgB subfamily.

It localises to the cytoplasm. It catalyses the reaction Transfers a segment of a (1-&gt;4)-alpha-D-glucan chain to a primary hydroxy group in a similar glucan chain.. The protein operates within glycan biosynthesis; glycogen biosynthesis. Its function is as follows. Glycogen-branching enzyme participates in the glycogen biosynthetic process along with glycogenin and glycogen synthase. Generates alpha-1,6-glucosidic branches from alpha-1,4-linked glucose chains, to increase solubility of the glycogen polymer. In Cryptococcus neoformans var. neoformans serotype D (strain B-3501A) (Filobasidiella neoformans), this protein is 1,4-alpha-glucan-branching enzyme (GLC3).